The primary structure comprises 302 residues: Sulfate adenylyltransferase subunit 2 (302 aa).

The interval 280–302 (RQGRAIDHDQSGSMELKKRQGYF) is disordered.

The protein belongs to the PAPS reductase family. CysD subfamily. In terms of assembly, heterodimer composed of CysD, the smaller subunit, and CysN.

The enzyme catalyses sulfate + ATP + H(+) = adenosine 5'-phosphosulfate + diphosphate. It participates in sulfur metabolism; hydrogen sulfide biosynthesis; sulfite from sulfate: step 1/3. In terms of biological role, with CysN forms the ATP sulfurylase (ATPS) that catalyzes the adenylation of sulfate producing adenosine 5'-phosphosulfate (APS) and diphosphate, the first enzymatic step in sulfur assimilation pathway. APS synthesis involves the formation of a high-energy phosphoric-sulfuric acid anhydride bond driven by GTP hydrolysis by CysN coupled to ATP hydrolysis by CysD. The sequence is that of Sulfate adenylyltransferase subunit 2 from Vibrio parahaemolyticus serotype O3:K6 (strain RIMD 2210633).